The chain runs to 344 residues: Endo-1,4-beta-xylanase UM03411 (344 aa).

The signal sequence occupies residues 1-21 (MKTNFLVLLSALLAASSAVTA). A GH10 domain is found at 35–338 (QRAGSSLNAA…KPAYNAVLST (304 aa)). The active-site Proton donor is the Glu166. N-linked (GlcNAc...) asparagine glycosylation is present at Asn171. Glu275 functions as the Nucleophile in the catalytic mechanism. Cys293 and Cys299 form a disulfide bridge. N-linked (GlcNAc...) asparagine glycans are attached at residues Asn310 and Asn323.

Belongs to the glycosyl hydrolase 10 (cellulase F) family.

The protein localises to the secreted. It catalyses the reaction Endohydrolysis of (1-&gt;4)-beta-D-xylosidic linkages in xylans.. It participates in glycan degradation; xylan degradation. In terms of biological role, endo-1,4-beta-xylanase involved in the hydrolysis of xylan, a major structural heterogeneous polysaccharide found in plant biomass representing the second most abundant polysaccharide in the biosphere, after cellulose. The protein is Endo-1,4-beta-xylanase UM03411 of Mycosarcoma maydis (Corn smut fungus).